A 966-amino-acid chain; its full sequence is Leucine--tRNA ligase (966 aa).

A 'HIGH' region motif is present at residues 41–51 (PYLNGNLHAGH). The 'KMSKS' region motif lies at 632-636 (KMSKS). Lysine 635 lines the ATP pocket.

It belongs to the class-I aminoacyl-tRNA synthetase family.

Its subcellular location is the cytoplasm. The catalysed reaction is tRNA(Leu) + L-leucine + ATP = L-leucyl-tRNA(Leu) + AMP + diphosphate. The polypeptide is Leucine--tRNA ligase (Methanosarcina mazei (strain ATCC BAA-159 / DSM 3647 / Goe1 / Go1 / JCM 11833 / OCM 88) (Methanosarcina frisia)).